The chain runs to 241 residues: ATP synthase subunit a (241 aa).

The next 5 membrane-spanning stretches (helical) occupy residues 30 to 50, 89 to 109, 128 to 148, 193 to 213, and 214 to 234; these read GQVFLSSWILIGILLAFVLVG, LPFIGTLFLFIFVSNWGGALI, INTTVAMALLVSLAYFYAGLS, LAVGVLVYLVPLIVPLPVMLL, and GLFTSAIQALIFATLAAFYIG.

Belongs to the ATPase A chain family. In terms of assembly, F-type ATPases have 2 components, CF(1) - the catalytic core - and CF(0) - the membrane proton channel. CF(1) has five subunits: alpha(3), beta(3), gamma(1), delta(1), epsilon(1). CF(0) has four main subunits: a, b, b' and c.

It is found in the cellular thylakoid membrane. Functionally, key component of the proton channel; it plays a direct role in the translocation of protons across the membrane. The polypeptide is ATP synthase subunit a (Synechococcus sp. (strain CC9902)).